Consider the following 319-residue polypeptide: ATP-dependent 6-phosphofructokinase (319 aa).

Glycine 11 contacts ATP. 21–25 (RAVVR) is a binding site for ADP. Residues 72–73 (RC) and 102–105 (GDGS) each bind ATP. Aspartate 103 contributes to the Mg(2+) binding site. Substrate is bound at residue 125 to 127 (TID). Aspartate 127 serves as the catalytic Proton acceptor. Position 154 (arginine 154) interacts with ADP. Substrate contacts are provided by residues arginine 162 and 169-171 (MGR). Residues 185 to 187 (GAE), arginine 211, and 213 to 215 (KKH) contribute to the ADP site. Substrate contacts are provided by residues glutamate 222, arginine 243, and 249–252 (HIQR).

It belongs to the phosphofructokinase type A (PFKA) family. ATP-dependent PFK group I subfamily. Prokaryotic clade 'B1' sub-subfamily. As to quaternary structure, homotetramer. Requires Mg(2+) as cofactor.

It localises to the cytoplasm. It catalyses the reaction beta-D-fructose 6-phosphate + ATP = beta-D-fructose 1,6-bisphosphate + ADP + H(+). It participates in carbohydrate degradation; glycolysis; D-glyceraldehyde 3-phosphate and glycerone phosphate from D-glucose: step 3/4. With respect to regulation, allosterically activated by ADP and other diphosphonucleosides, and allosterically inhibited by phosphoenolpyruvate. Catalyzes the phosphorylation of D-fructose 6-phosphate to fructose 1,6-bisphosphate by ATP, the first committing step of glycolysis. In Halalkalibacterium halodurans (strain ATCC BAA-125 / DSM 18197 / FERM 7344 / JCM 9153 / C-125) (Bacillus halodurans), this protein is ATP-dependent 6-phosphofructokinase.